Reading from the N-terminus, the 534-residue chain is NAD(P)H-quinone oxidoreductase subunit 2 (534 aa).

The next 14 membrane-spanning stretches (helical) occupy residues 15–35 (ILPEGIVILTLLGVLIVDLIL), 42–62 (WIGYLAIAGLFTSIVALYFQW), 79–99 (LSIVFRGIIALSAAVTILMSI), 109–129 (LAEFIAILLSATLGGMFLSGA), 132–152 (LVMIFISLETLSISSYLLTGY), 167–187 (LLIGASSTAVFLYGVSLLYGL), 210–230 (LGLVIALVFAIAGIGFKISAA), 244–264 (PTPVIAFLSVGSKAAGFALAI), 280–300 (FVFTALAVLSMILGNVVALAQ), 306–326 (MLAYSSIAQAGFVMIGLIAGT), 334–354 (IFYLLVYLFMNLCGFTCIILF), 378–398 (LGLSIALLSLGGIPPLAGFFG), 410–432 (GLYWLVLLGLVTTVVSIYYYIRV), and 466–486 (VGLVITLIATSLAGILSNPLF).

The protein belongs to the complex I subunit 2 family. As to quaternary structure, NDH-1 can be composed of about 15 different subunits; different subcomplexes with different compositions have been identified which probably have different functions.

The protein localises to the cellular thylakoid membrane. It carries out the reaction a plastoquinone + NADH + (n+1) H(+)(in) = a plastoquinol + NAD(+) + n H(+)(out). The enzyme catalyses a plastoquinone + NADPH + (n+1) H(+)(in) = a plastoquinol + NADP(+) + n H(+)(out). NDH-1 shuttles electrons from an unknown electron donor, via FMN and iron-sulfur (Fe-S) centers, to quinones in the respiratory and/or the photosynthetic chain. The immediate electron acceptor for the enzyme in this species is believed to be plastoquinone. Couples the redox reaction to proton translocation, and thus conserves the redox energy in a proton gradient. Cyanobacterial NDH-1 also plays a role in inorganic carbon-concentration. This Nostoc punctiforme (strain ATCC 29133 / PCC 73102) protein is NAD(P)H-quinone oxidoreductase subunit 2.